The chain runs to 481 residues: MPAVMIQGTGSDVGKSLLVAGLCRAARRRGLSVAPFKPQNMSNNAAVTADGGEIGRAQALQARASGLEPLTDMNPVLLKPESDHGSQVIVQGRRVGTLRARDWFERKPALMAPVLESFARLTAAHDLVIVEGAGSPAEVNLRRGDIANMGFARTAGVPVVLAGDIDRGGVIAQLVGTQAVIDPEDAAMIAGFLVNKFRGDVRLFDEGYRLIEARTGWRGYGVVPFFPEAALLPAEDALDLGRPTGQGALTVAWLAFSRVANFDDLDPLKQEPGLTVRMVRPGQPIPAEADLVILPGTKSTRGDLAFLRAQGWDVDLRAHHRRGGRVLGICGGYQMLGRSVADPEGLEGAPGVTEGLGLLDVETVMHPDKRLTRVAGRHRASGAELTGYEIHIGATEGPDCARPFAEIEGRPEGATSADGRVVGSYLHGMFGADGFRRAFLESLGAATSDLAYDARVETVLDALADHLETHVDVAGLLALAR.

Residues 248-435 (ALTVAWLAFS…LHGMFGADGF (188 aa)) enclose the GATase cobBQ-type domain. C330 serves as the catalytic Nucleophile. The active site involves H427.

The protein belongs to the CobB/CobQ family. CobQ subfamily.

The protein operates within cofactor biosynthesis; adenosylcobalamin biosynthesis. Its function is as follows. Catalyzes amidations at positions B, D, E, and G on adenosylcobyrinic A,C-diamide. NH(2) groups are provided by glutamine, and one molecule of ATP is hydrogenolyzed for each amidation. This is Cobyric acid synthase from Cereibacter sphaeroides (strain ATCC 17023 / DSM 158 / JCM 6121 / CCUG 31486 / LMG 2827 / NBRC 12203 / NCIMB 8253 / ATH 2.4.1.) (Rhodobacter sphaeroides).